Consider the following 244-residue polypeptide: Securin-like protein (244 aa).

The segment at 31-53 is disordered; it reads ELEKTPSRGGLGLVVNSSKTPGG.

Forms a complex (via C-terminus) with separase sep-1. Interaction with ify-1 stabilizes sep-1. Also maintains the complex in the cytoplasm during interphase and recruits it to chromosomes during the first meiotic division. Interacts with E3 ubiquitin-protein ligase etc-1. Post-translationally, ubiquitinated by etc-1 likely at the onset of anaphase, resulting in its degradation. Expressed in germ cells including oocytes.

It is found in the cytoplasm. Its subcellular location is the chromosome. It localises to the cytoskeleton. The protein resides in the spindle. Functionally, acts as a chaperone and as an inhibitor for separase sep-1. Plays an essential role in maintaining chromosome cohesion prior to meiotic and mitotic anaphase, in cytokinesis and in organizing the spindle and the centrosome. Ubiquitination-dependent degradation at the onset of anaphase is likely to activate sep-1 resulting in the proteolysis of the cohesin complex and the subsequent segregation of the chromosomes. Also required for cortical granule exocytosis. The polypeptide is Securin-like protein (Caenorhabditis elegans).